A 177-amino-acid chain; its full sequence is Large ribosomal subunit protein uL5c (177 aa).

It belongs to the universal ribosomal protein uL5 family. As to quaternary structure, part of the 50S ribosomal subunit; contacts the 5S rRNA.

It is found in the plastid. The protein localises to the chloroplast. Functionally, binds 5S rRNA, forms part of the central protuberance of the 50S subunit. The chain is Large ribosomal subunit protein uL5c (rpl5) from Cyanidioschyzon merolae (strain NIES-3377 / 10D) (Unicellular red alga).